The primary structure comprises 74 residues: Conotoxin Vc6.8 (74 aa).

The first 19 residues, 1 to 19 (MEKLTILLLVAAVLMSTQA), serve as a signal peptide directing secretion. The propeptide occupies 20–34 (LMQEQRQKAKINLFS). Intrachain disulfides connect cysteine 49–cysteine 62, cysteine 55–cysteine 66, and cysteine 61–cysteine 70.

Belongs to the conotoxin O2 superfamily. In terms of tissue distribution, expressed by the venom duct.

Its subcellular location is the secreted. Inhibits voltage-gated ion channels. The sequence is that of Conotoxin Vc6.8 from Conus victoriae (Queen Victoria cone).